The following is a 158-amino-acid chain: C-type lectin BiL (158 aa).

The N-terminal stretch at 1 to 23 (MGRFIFVSFGLLVVFLSLSGAKG) is a signal peptide. 4 disulfides stabilise this stretch: C26-C37, C54-C154, C61-C156, and C129-C146. Residues 33–155 (MNGLCYKIFD…CESKNAFLCQ (123 aa)) form the C-type lectin domain. Residues Q119, D121, E127, N142, and D143 each coordinate Ca(2+). The Galactose-binding signature appears at 119–121 (QPD).

As to quaternary structure, homodimer; disulfide-linked. As to expression, expressed by the venom gland.

It is found in the secreted. Lectin with a hemagglutinating activity that is inhibited by galactose, lactose and EDTA. Is calcium-dependent. Shows effects on the renal function of isolated perfused rat kidneys by increasing both perfusion pressure (PP) and renal vascular resistance (RVR). In addition, the urinary flow and glomerular filtration rate (GFR) decreases significantly. The changes observed may reflect direct injury to the glomerular and tubular renal cells, and the rise in permeability in the glomerular endothelial cells, may be the effect of interactions of C-type lectin with endothelial cells or due to release of other mediators by mesangial, tubular and endothelial cells. The polypeptide is C-type lectin BiL (Bothrops insularis (Golden lancehead)).